The chain runs to 451 residues: Crh-like protein 2 (451 aa).

A signal peptide spans 1 to 21 (MQFNSLVLLAGATILSPFVQA). The region spanning 22–241 (QTWTTCNPLN…FTKVPFTMYV (220 aa)) is the GH16 domain. Residues Cys-27 and Cys-34 are joined by a disulfide bond. Asn-31, Asn-43, Asn-49, and Asn-59 each carry an N-linked (GlcNAc...) asparagine glycan. The active-site Nucleophile is the Glu-121. The Proton donor role is filled by Glu-125. Glu-125 serves as a coordination point for chitin. Residues Asn-130, Asn-143, and Asn-165 are each glycosylated (N-linked (GlcNAc...) asparagine). Residues Arg-206, Trp-210, and Thr-222 each contribute to the chitin site. N-linked (GlcNAc...) asparagine glycosylation occurs at Asn-273. The chain crosses the membrane as a helical span at residues 305–325 (VYCGGGAAVAALVSAFLFTFL). A glycan (N-linked (GlcNAc...) asparagine) is linked at Asn-366.

Belongs to the glycosyl hydrolase 16 family. CRH1 subfamily. In terms of assembly, forms homodimers as well as heterodimers with other crh protein members crh1 and crh3. Dimerization may be necessary for the transglycosylation activity.

The protein localises to the membrane. The catalysed reaction is Random endo-hydrolysis of N-acetyl-beta-D-glucosaminide (1-&gt;4)-beta-linkages in chitin and chitodextrins.. In terms of biological role, dual chitinase/transglycosylase that plays a role in cell wall architecture. Chitinase and transglycosylase activities are coupled. Required for the polysaccharide cross-linking at the septa and the cell wall. More specifically, transfers chitin to 1,6-beta-glucan in the cell wall. This chain is Crh-like protein 2, found in Botryotinia fuckeliana (strain B05.10) (Noble rot fungus).